A 380-amino-acid chain; its full sequence is Cytochrome b (380 aa).

The next 4 membrane-spanning stretches (helical) occupy residues 34-54 (FGSL…LLAM), 78-99 (WLIR…FLHI), 114-134 (WNTG…GYVL), and 179-199 (FFAL…IHLI). 2 residues coordinate heme b: H84 and H98. Heme b contacts are provided by H183 and H197. Position 202 (H202) interacts with a ubiquinone. Transmembrane regions (helical) follow at residues 227–247 (LKDI…ALFS), 289–309 (LGGV…PFLH), 321–341 (LSQT…WVGS), and 348–368 (FIII…ILFP).

It belongs to the cytochrome b family. As to quaternary structure, the cytochrome bc1 complex contains 11 subunits: 3 respiratory subunits (MT-CYB, CYC1 and UQCRFS1), 2 core proteins (UQCRC1 and UQCRC2) and 6 low-molecular weight proteins (UQCRH/QCR6, UQCRB/QCR7, UQCRQ/QCR8, UQCR10/QCR9, UQCR11/QCR10 and a cleavage product of UQCRFS1). This cytochrome bc1 complex then forms a dimer. The cofactor is heme b.

The protein localises to the mitochondrion inner membrane. Functionally, component of the ubiquinol-cytochrome c reductase complex (complex III or cytochrome b-c1 complex) that is part of the mitochondrial respiratory chain. The b-c1 complex mediates electron transfer from ubiquinol to cytochrome c. Contributes to the generation of a proton gradient across the mitochondrial membrane that is then used for ATP synthesis. The protein is Cytochrome b (MT-CYB) of Tragopan temminckii (Temminck's tragopan).